We begin with the raw amino-acid sequence, 375 residues long: Alcohol dehydrogenase 1 (375 aa).

Ser-1 is subject to N-acetylserine. Zn(2+) is bound by residues Cys-46, His-67, Cys-97, Cys-100, Cys-103, Cys-111, and Cys-174. NAD(+)-binding positions include Gly-199 to Gly-204, Asp-223, Lys-228, Val-293 to Val-295, and Arg-370.

It belongs to the zinc-containing alcohol dehydrogenase family. Class-I subfamily. As to quaternary structure, homodimer. It depends on Zn(2+) as a cofactor.

The protein localises to the cytoplasm. It carries out the reaction a primary alcohol + NAD(+) = an aldehyde + NADH + H(+). The catalysed reaction is a secondary alcohol + NAD(+) = a ketone + NADH + H(+). The chain is Alcohol dehydrogenase 1 from Naja naja (Indian cobra).